The following is a 132-amino-acid chain: Protein KRTCAP2 homolog (132 aa).

The next 4 membrane-spanning stretches (helical) occupy residues 1–21, 35–55, 69–89, and 92–109; these read MAVP…LIFS, MATV…LTAV, AKLF…CGMV, and VCAT…YYIN.

The protein belongs to the KRTCAP2 family. As to quaternary structure, component of the oligosaccharyltransferase (OST) complex.

It is found in the membrane. Its function is as follows. Subunit of the oligosaccharyl transferase (OST) complex that catalyzes the initial transfer of a defined glycan (Glc(3)Man(9)GlcNAc(2) in eukaryotes) from the lipid carrier dolichol-pyrophosphate to an asparagine residue within an Asn-X-Ser/Thr consensus motif in nascent polypeptide chains, the first step in protein N-glycosylation. N-glycosylation occurs cotranslationally and the complex associates with the Sec61 complex at the channel-forming translocon complex that mediates protein translocation across the endoplasmic reticulum (ER). All subunits are required for a maximal enzyme activity. This is Protein KRTCAP2 homolog from Aedes aegypti (Yellowfever mosquito).